Consider the following 652-residue polypeptide: Phosphomethylpyrimidine synthase (652 aa).

Residues Asn235, Met264, Tyr293, His329, 349-351, 390-393, and Glu429 each bind substrate; these read SRG and DGMR. His433 serves as a coordination point for Zn(2+). Tyr456 serves as a coordination point for substrate. Position 497 (His497) interacts with Zn(2+). Residues Cys577, Cys580, and Cys585 each coordinate [4Fe-4S] cluster.

The protein belongs to the ThiC family. Homodimer. [4Fe-4S] cluster is required as a cofactor.

The enzyme catalyses 5-amino-1-(5-phospho-beta-D-ribosyl)imidazole + S-adenosyl-L-methionine = 4-amino-2-methyl-5-(phosphooxymethyl)pyrimidine + CO + 5'-deoxyadenosine + formate + L-methionine + 3 H(+). It participates in cofactor biosynthesis; thiamine diphosphate biosynthesis. Catalyzes the synthesis of the hydroxymethylpyrimidine phosphate (HMP-P) moiety of thiamine from aminoimidazole ribotide (AIR) in a radical S-adenosyl-L-methionine (SAM)-dependent reaction. This is Phosphomethylpyrimidine synthase from Shewanella woodyi (strain ATCC 51908 / MS32).